Here is a 513-residue protein sequence, read N- to C-terminus: ATP synthase subunit alpha (513 aa).

Residue 169–176 (GDRQIGKT) coordinates ATP.

It belongs to the ATPase alpha/beta chains family. As to quaternary structure, F-type ATPases have 2 components, CF(1) - the catalytic core - and CF(0) - the membrane proton channel. CF(1) has five subunits: alpha(3), beta(3), gamma(1), delta(1), epsilon(1). CF(0) has three main subunits: a(1), b(2) and c(9-12). The alpha and beta chains form an alternating ring which encloses part of the gamma chain. CF(1) is attached to CF(0) by a central stalk formed by the gamma and epsilon chains, while a peripheral stalk is formed by the delta and b chains.

The protein resides in the cell inner membrane. It catalyses the reaction ATP + H2O + 4 H(+)(in) = ADP + phosphate + 5 H(+)(out). In terms of biological role, produces ATP from ADP in the presence of a proton gradient across the membrane. The alpha chain is a regulatory subunit. This Francisella tularensis subsp. tularensis (strain WY96-3418) protein is ATP synthase subunit alpha.